An 88-amino-acid polypeptide reads, in one-letter code: Sec-independent protein translocase protein TatA (88 aa).

The chain crosses the membrane as a helical span at residues 3-23 (IFGVGLPEVTVILILALLIFG). The tract at residues 56–88 (MNEQDKDESPISIESNQTNEINQEKIDSENSKK) is disordered. A compositionally biased stretch (polar residues) spans 67 to 76 (SIESNQTNEI). Residues 77 to 88 (NQEKIDSENSKK) show a composition bias toward basic and acidic residues.

Belongs to the TatA/E family. Forms a complex with TatC.

The protein localises to the cell inner membrane. In terms of biological role, part of the twin-arginine translocation (Tat) system that transports large folded proteins containing a characteristic twin-arginine motif in their signal peptide across membranes. TatA could form the protein-conducting channel of the Tat system. The protein is Sec-independent protein translocase protein TatA of Prochlorococcus marinus (strain AS9601).